The primary structure comprises 219 residues: Beta-crystallin B2 (219 aa).

Ala2 is subject to N-acetylalanine. Residues 2-16 (ASEHQMPASKQQPAS) form an N-terminal arm region. 2 Beta/gamma crystallin 'Greek key' domains span residues 17-56 (PNIA…LVHS) and 57-101 (GPWV…RPIK). The segment at 102 to 120 (VVRAPRQPLPTRQTKDSQE) is connecting peptide. Beta/gamma crystallin 'Greek key' domains follow at residues 121–162 (HKIV…RVQS) and 163–205 (GTWV…RRIR). Residues 207–219 (MQWHQRGAYHPSN) form a C-terminal arm region.

It belongs to the beta/gamma-crystallin family. As to quaternary structure, homo/heterodimer, or complexes of higher-order. The structure of beta-crystallin oligomers seems to be stabilized through interactions between the N-terminal arms.

Functionally, crystallins are the dominant structural components of the vertebrate eye lens. In Gallus gallus (Chicken), this protein is Beta-crystallin B2 (CRYBB2).